The following is a 288-amino-acid chain: Nucleotide-binding protein PM0169 (288 aa).

ATP is bound at residue 8 to 15; the sequence is GHSGAGKS. Position 56–59 (56–59) interacts with GTP; it reads DIRN.

This sequence belongs to the RapZ-like family.

Its function is as follows. Displays ATPase and GTPase activities. The protein is Nucleotide-binding protein PM0169 of Pasteurella multocida (strain Pm70).